The primary structure comprises 443 residues: Tubulin beta-1/beta-2 chain (443 aa).

The GTP site is built by glutamine 11, glutamate 69, serine 138, glycine 142, threonine 143, glycine 144, asparagine 204, and asparagine 226. Glutamate 69 is a binding site for Mg(2+). The disordered stretch occupies residues 424–443; that stretch reads QYQDASAEEEGEFEGEEEEA. Over residues 429 to 443 the composition is skewed to acidic residues; it reads SAEEEGEFEGEEEEA.

This sequence belongs to the tubulin family. In terms of assembly, dimer of alpha and beta chains. A typical microtubule is a hollow water-filled tube with an outer diameter of 25 nm and an inner diameter of 15 nM. Alpha-beta heterodimers associate head-to-tail to form protofilaments running lengthwise along the microtubule wall with the beta-tubulin subunit facing the microtubule plus end conferring a structural polarity. Microtubules usually have 13 protofilaments but different protofilament numbers can be found in some organisms and specialized cells. The cofactor is Mg(2+).

It is found in the cytoplasm. The protein localises to the cytoskeleton. Functionally, tubulin is the major constituent of microtubules, a cylinder consisting of laterally associated linear protofilaments composed of alpha- and beta-tubulin heterodimers. Microtubules grow by the addition of GTP-tubulin dimers to the microtubule end, where a stabilizing cap forms. Below the cap, tubulin dimers are in GDP-bound state, owing to GTPase activity of alpha-tubulin. In Chlamydomonas reinhardtii (Chlamydomonas smithii), this protein is Tubulin beta-1/beta-2 chain (TUBB1).